A 572-amino-acid polypeptide reads, in one-letter code: Proline--tRNA ligase (572 aa).

The protein belongs to the class-II aminoacyl-tRNA synthetase family. ProS type 1 subfamily. In terms of assembly, homodimer.

It is found in the cytoplasm. It carries out the reaction tRNA(Pro) + L-proline + ATP = L-prolyl-tRNA(Pro) + AMP + diphosphate. Its function is as follows. Catalyzes the attachment of proline to tRNA(Pro) in a two-step reaction: proline is first activated by ATP to form Pro-AMP and then transferred to the acceptor end of tRNA(Pro). As ProRS can inadvertently accommodate and process non-cognate amino acids such as alanine and cysteine, to avoid such errors it has two additional distinct editing activities against alanine. One activity is designated as 'pretransfer' editing and involves the tRNA(Pro)-independent hydrolysis of activated Ala-AMP. The other activity is designated 'posttransfer' editing and involves deacylation of mischarged Ala-tRNA(Pro). The misacylated Cys-tRNA(Pro) is not edited by ProRS. The protein is Proline--tRNA ligase of Psychrobacter cryohalolentis (strain ATCC BAA-1226 / DSM 17306 / VKM B-2378 / K5).